A 210-amino-acid polypeptide reads, in one-letter code: Natriuretic peptide BM026 (210 aa).

The signal sequence occupies residues 1–26 (MVGPSRLAGGGLLLLLLALLPVALDG). Positions 83 to 99 (CFGHKIDRISHSSGMGC) are natriuretic peptide domain 1. Cys-83 and Cys-99 are joined by a disulfide. Residues 122-134 (ESKKSRAARDRMV) show a composition bias toward basic and acidic residues. Residues 122–210 (ESKKSRAARD…QFNSKSSQVA (89 aa)) are disordered. Gly residues predominate over residues 140 to 150 (AGGGGGGGGGD). Basic and acidic residues predominate over residues 156–176 (ELAKKDQHNNCFGRRIDRISH). The segment at 166-182 (CFGRRIDRISHSTDLGC) is natriuretic peptide domain 2. Cysteines 166 and 182 form a disulfide. The segment covering 201–210 (QFNSKSSQVA) has biased composition (polar residues).

This sequence belongs to the natriuretic peptide family. Expressed by the venom gland.

Its subcellular location is the secreted. Its function is as follows. Natriuretic peptide that dose-dependently induces the rapid relaxation of rat aortic strips phenylephrine-precontracted. Acts by stimulating cGMP production in a dose-dependent manner (by probably activating NPR1 and/or NPR2). May also show potent hypotensive effects. In Bungarus multicinctus (Many-banded krait), this protein is Natriuretic peptide BM026.